Here is a 479-residue protein sequence, read N- to C-terminus: Glutamyl-tRNA(Gln) amidotransferase subunit A (479 aa).

Residues Lys71 and Ser146 each act as charge relay system in the active site. Ser170 serves as the catalytic Acyl-ester intermediate.

The protein belongs to the amidase family. GatA subfamily. In terms of assembly, heterotrimer of A, B and C subunits.

The enzyme catalyses L-glutamyl-tRNA(Gln) + L-glutamine + ATP + H2O = L-glutaminyl-tRNA(Gln) + L-glutamate + ADP + phosphate + H(+). Allows the formation of correctly charged Gln-tRNA(Gln) through the transamidation of misacylated Glu-tRNA(Gln) in organisms which lack glutaminyl-tRNA synthetase. The reaction takes place in the presence of glutamine and ATP through an activated gamma-phospho-Glu-tRNA(Gln). The polypeptide is Glutamyl-tRNA(Gln) amidotransferase subunit A (Lactobacillus johnsonii (strain CNCM I-12250 / La1 / NCC 533)).